The chain runs to 95 residues: Co-chaperonin GroES (95 aa).

This sequence belongs to the GroES chaperonin family. As to quaternary structure, heptamer of 7 subunits arranged in a ring. Interacts with the chaperonin GroEL.

The protein resides in the cytoplasm. Its function is as follows. Together with the chaperonin GroEL, plays an essential role in assisting protein folding. The GroEL-GroES system forms a nano-cage that allows encapsulation of the non-native substrate proteins and provides a physical environment optimized to promote and accelerate protein folding. GroES binds to the apical surface of the GroEL ring, thereby capping the opening of the GroEL channel. In Streptococcus equi subsp. equi (strain 4047), this protein is Co-chaperonin GroES.